Consider the following 311-residue polypeptide: Aquaporin Lacbi1:392091 (311 aa).

The Cytoplasmic segment spans residues 1–16; it reads MHPQVASLFDNVYEDL. Residues 17 to 37 traverse the membrane as a helical segment; the sequence is AAATLEFIGTAFFLLFGLGGI. Residues 38–56 are Extracellular-facing; sequence QASTAEDTASGQPPASGIE. The helical transmembrane segment at 57–77 threads the bilayer; sequence HVLYISTCMGLSLVVSAWLFF. Residue R78 is a topological domain, cytoplasmic. The helical transmembrane segment at 79 to 99 threads the bilayer; sequence VTGGLFNPNISFALLLVGGLK. The short motif at 85-87 is the NPA 1 element; it reads NPN. P100 is a topological domain (extracellular). The chain crosses the membrane as a helical span at residues 101 to 121; that stretch reads LRFVLFCIAQLTGAIAGAAIV. Residues 122 to 143 lie on the Cytoplasmic side of the membrane; sequence RGLTSAPLSVNNVLQQGTSAAQ. The chain crosses the membrane as a helical span at residues 144–164; sequence GVFIEMFITAALVLSVLMLAA. Over 165–168 the chain is Extracellular; sequence EKHE. The helical transmembrane segment at 169–189 threads the bilayer; the sequence is ATPFAPVGIGLTLFACHLFAV. At 190–215 the chain is on the cytoplasmic side; the sequence is YYTGAAMNSARAFGPAVISGFPEPQH. Positions 197–199 match the NPA 2 motif; sequence NSA. The helical transmembrane segment at 216 to 236 threads the bilayer; the sequence is WVYWVGPFLGSLLGAGFYATL. Residues 237-311 lie on the Extracellular side of the membrane; that stretch reads KHYKYWHLNP…TSSRTNFSPV (75 aa). The disordered stretch occupies residues 276–311; the sequence is DEETRNGCASNEEGVRATGDEKSSNATSSRTNFSPV. Positions 288-298 are enriched in basic and acidic residues; that stretch reads EGVRATGDEKS. The span at 299-311 shows a compositional bias: polar residues; the sequence is SNATSSRTNFSPV. Residue N300 is glycosylated (N-linked (GlcNAc...) asparagine).

It belongs to the MIP/aquaporin (TC 1.A.8) family.

It localises to the membrane. The enzyme catalyses H2O(in) = H2O(out). It carries out the reaction NH4(+)(in) = NH4(+)(out). Water channel required to facilitate the transport of water across membranes. Also enables low but statistically significant ammonium permeability. May be involved in fungal nitrogen (ammonium) support of the plant host in symbiosis. In Laccaria bicolor (strain S238N-H82 / ATCC MYA-4686) (Bicoloured deceiver), this protein is Aquaporin Lacbi1:392091.